The following is a 162-amino-acid chain: MTTSFYDLECKDKKGESFKFDQLKGKVVLIVNVASKCGFTPQYKELEELYKKYQDKGFVILGFPCNQFGKQEPGSDEQITEFCQLNYGVTFPIMKKIDVNGSNADSVYNYLKSQKAGLLGFKGIKWNFEKFLVDSNGKVVQRFSSLTKPSSLDQEIQSLLSK.

The Cysteine sulfenic acid (-SOH) intermediate role is filled by cysteine 37. A disulfide bridge links cysteine 37 with cysteine 83.

The protein belongs to the glutathione peroxidase family. As to quaternary structure, monomer.

The protein localises to the cytoplasm. It is found in the nucleus. The protein resides in the mitochondrion outer membrane. Its subcellular location is the mitochondrion inner membrane. The enzyme catalyses a hydroperoxide + [thioredoxin]-dithiol = an alcohol + [thioredoxin]-disulfide + H2O. In terms of biological role, glutathione peroxidase-like protein that protects cells from phospholipid hydroperoxides and nonphospholipid peroxides during oxidative stress. Plays an important role in the oxidative stress-induced response in the presence of Ca(2+). Has peroxidase activity using preferentially thioredoxin as a reducing power. The redox state of the mitochondrial GPX2 is regulated by TRX1 and TRX2 (cytoplasmic thioredoxin), and by TRX3 (mitochondrial matrix thioredoxin). Involved in sporulation. This chain is Glutathione peroxidase-like peroxiredoxin 2, found in Saccharomyces cerevisiae (strain ATCC 204508 / S288c) (Baker's yeast).